Consider the following 159-residue polypeptide: 2-C-methyl-D-erythritol 2,4-cyclodiphosphate synthase (159 aa).

Residues D10 and H12 each contribute to the a divalent metal cation site. 4-CDP-2-C-methyl-D-erythritol 2-phosphate contacts are provided by residues 10-12 (DVH) and 37-38 (HS). An a divalent metal cation-binding site is contributed by H45. Residues 59–61 (DIG), 64–68 (FLDTD), 103–109 (AQAPKML), 135–138 (TTTE), F142, and R145 contribute to the 4-CDP-2-C-methyl-D-erythritol 2-phosphate site.

The protein belongs to the IspF family. Homotrimer. A divalent metal cation is required as a cofactor.

The catalysed reaction is 4-CDP-2-C-methyl-D-erythritol 2-phosphate = 2-C-methyl-D-erythritol 2,4-cyclic diphosphate + CMP. It functions in the pathway isoprenoid biosynthesis; isopentenyl diphosphate biosynthesis via DXP pathway; isopentenyl diphosphate from 1-deoxy-D-xylulose 5-phosphate: step 4/6. In terms of biological role, involved in the biosynthesis of isopentenyl diphosphate (IPP) and dimethylallyl diphosphate (DMAPP), two major building blocks of isoprenoid compounds. Catalyzes the conversion of 4-diphosphocytidyl-2-C-methyl-D-erythritol 2-phosphate (CDP-ME2P) to 2-C-methyl-D-erythritol 2,4-cyclodiphosphate (ME-CPP) with a corresponding release of cytidine 5-monophosphate (CMP). This chain is 2-C-methyl-D-erythritol 2,4-cyclodiphosphate synthase, found in Francisella tularensis subsp. holarctica (strain FTNF002-00 / FTA).